A 126-amino-acid polypeptide reads, in one-letter code: Aspartate 1-decarboxylase (126 aa).

The active-site Schiff-base intermediate with substrate; via pyruvic acid is the Ser25. The residue at position 25 (Ser25) is a Pyruvic acid (Ser). Thr57 provides a ligand contact to substrate. The active-site Proton donor is Tyr58. 73–75 (GAA) is a binding site for substrate.

This sequence belongs to the PanD family. In terms of assembly, heterooctamer of four alpha and four beta subunits. The cofactor is pyruvate. Is synthesized initially as an inactive proenzyme, which is activated by self-cleavage at a specific serine bond to produce a beta-subunit with a hydroxyl group at its C-terminus and an alpha-subunit with a pyruvoyl group at its N-terminus.

The protein localises to the cytoplasm. It catalyses the reaction L-aspartate + H(+) = beta-alanine + CO2. Its pathway is cofactor biosynthesis; (R)-pantothenate biosynthesis; beta-alanine from L-aspartate: step 1/1. Its function is as follows. Catalyzes the pyruvoyl-dependent decarboxylation of aspartate to produce beta-alanine. This Pectobacterium carotovorum subsp. carotovorum (strain PC1) protein is Aspartate 1-decarboxylase.